The sequence spans 866 residues: E3 ubiquitin-protein ligase RNF216 (866 aa).

Disordered stretches follow at residues 46-117 (LVTP…NPRS), 131-161 (YTES…SAAL), and 211-240 (EFPG…HPLG). Over residues 55–76 (EEEDLDDDVILTEDDSEDDYGE) the composition is skewed to acidic residues. Glycyl lysine isopeptide (Lys-Gly) (interchain with G-Cter in SUMO2) cross-links involve residues Leu80, Thr89, and Lys100. Polar residues predominate over residues 137 to 156 (LETQNQSSEDSETELLSNLG). Glycyl lysine isopeptide (Lys-Gly) (interchain with G-Cter in SUMO2) cross-links involve residues Lys351 and Lys354. A Phosphoserine modification is found at Ser419. Residues Lys425, Lys430, Lys448, Lys459, and Lys485 each participate in a glycyl lysine isopeptide (Lys-Gly) (interchain with G-Cter in SUMO2) cross-link. Positions 475–491 (VQQEQEFYEQKIKEMAE) form a coiled coil. Residues 511–728 (QLIECRCCYG…SPGAPCQECS (218 aa)) form a TRIAD supradomain region. Cys515, Cys518, Cys537, Cys540, Cys605, and Cys608 together coordinate Zn(2+). Residues 515-564 (CRCCYGEFPFEELTQCADAHLFCKECLIRYAQEAVFGSGKLELSCMEGSC) form an RING-type 1 zinc finger. The IBR-type zinc finger occupies 583-648 (YKYYERKAEE…LWKEHNGLTC (66 aa)). A Glycyl lysine isopeptide (Lys-Gly) (interchain with G-Cter in SUMO2) cross-link involves residue Lys619. Zn(2+) is bound by residues Cys623, Cys628, Cys633, Cys636, His643, and Cys648. Glycyl lysine isopeptide (Lys-Gly) (interchain with G-Cter in SUMO2) cross-links involve residues Lys658 and Lys666. The Zn(2+) site is built by Cys675 and Cys678. Residues 675–703 (CHKCGTGLIKSEGCNRMSCRCGAQMCYLC) form an RING-type 2; atypical zinc finger. The active site involves Cys688. Zn(2+)-binding residues include Cys693, Cys695, Cys700, Cys703, and His716. A Phosphoserine; by MAPK1 modification is found at Ser719. Cys724 is a Zn(2+) binding site. The stretch at 737 to 763 (TEDDEKLIEEIQKEAEEEQKRKNGENT) forms a coiled coil. Glycyl lysine isopeptide (Lys-Gly) (interchain with G-Cter in SUMO2) cross-links involve residues Lys765 and Lys773.

As to quaternary structure, interacts with UBE2L3 and to some extent with UBE2L6. Interacts with TRAF3, TLR3, TLR4, TLR5 and TLR9. Isoform 3/ZIN binds RIPK1. (Microbial infection) Isoform 3/ZIN binds RIPK1 and HIV Vif. Auto-ubiquitinated. In terms of processing, phosphorylation at Ser-719 enhances acceptor ubiquitin binding and chain-type specificity towards 'Lys-63' di-ubiquitin but not di-ubiquitin with other linkage types. Ubiquitous, with the highest levels of expression in testis and peripheral blood leukocytes.

The protein localises to the cytoplasm. It is found in the cytoplasmic vesicle. It localises to the clathrin-coated vesicle. It catalyses the reaction S-ubiquitinyl-[E2 ubiquitin-conjugating enzyme]-L-cysteine + [acceptor protein]-L-lysine = [E2 ubiquitin-conjugating enzyme]-L-cysteine + N(6)-ubiquitinyl-[acceptor protein]-L-lysine.. Its pathway is protein modification; protein ubiquitination. Allosterically activated by 'Lys-63'-linked di-ubiquitin. E3 ubiquitin ligase which accepts ubiquitin from specific E2 ubiquitin-conjugating enzymes, and then transfers it to substrates promoting their ubiquitination. Plays a role in the regulation of antiviral responses by promoting the degradation of TRAF3, TLR4 and TLR9. In turn, down-regulates NF-kappa-B and IRF3 activation as well as beta interferon production. Also participates in the regulation of autophagy by ubiquitinating BECN1 leading to its degradation and autophagy inhibition. Plays a role in ARC-dependent synaptic plasticity by mediating ARC ubiquitination resulting in its rapid proteasomal degradation. Plays aso an essential role in spermatogenesis and male fertility. Mechanistically, regulates meiosis by promoting the degradation of PRKACB through the ubiquitin-mediated lysosome pathway. Modulates the gonadotropin-releasing hormone signal pathway by affecting the stability of STAU2 that is required for the microtubule-dependent transport of neuronal RNA from the cell body to the dendrite. In terms of biological role, inhibits TNF and IL-1 mediated activation of NF-kappa-B. Promotes TNF and RIP mediated apoptosis. The sequence is that of E3 ubiquitin-protein ligase RNF216 (RNF216) from Homo sapiens (Human).